The primary structure comprises 2282 residues: Cation channel sperm-associated targeting subunit tau (2282 aa).

The disordered stretch occupies residues Met-1–Arg-118. Composition is skewed to polar residues over residues Val-11–Arg-41 and Met-50–Ser-87. The span at Tyr-90–Arg-109 shows a compositional bias: basic and acidic residues. One can recognise a C2 domain in the interval Gln-131–Met-266. 10 disordered regions span residues Met-397–Leu-416, Glu-656–Glu-679, Asn-747–Pro-1066, Ser-1104–Ser-1153, Tyr-1217–Arg-1240, Asn-1426–Ser-1445, Arg-1452–Lys-1515, Glu-1542–Thr-1569, Asn-1908–Gln-1928, and Pro-2187–Lys-2222. 5 stretches are compositionally biased toward polar residues: residues Ile-750 to Pro-760, Ser-783 to Pro-792, Asp-800 to Asn-841, Ile-849 to Asn-858, and Ser-953 to Ser-974. A compositionally biased stretch (low complexity) spans Ser-1104–Ser-1123. Residues Asp-1124–Lys-1136 are compositionally biased toward polar residues. Composition is skewed to polar residues over residues Arg-1452–Ser-1466 and Asp-1473–Ser-1482. Positions Tyr-1484–Ser-1493 are enriched in basic and acidic residues. Over residues Asn-1495–Ser-1504 the composition is skewed to acidic residues. Composition is skewed to basic and acidic residues over residues Glu-1542–Ile-1555 and Ser-1916–Leu-1925.

Component of the CatSper complex or CatSpermasome composed of the core pore-forming members CATSPER1, CATSPER2, CATSPER3 and CATSPER4 as well as auxiliary members CATSPERB, CATSPERG, CATSPERD, CATSPERE, CATSPERZ, C2CD6/CATSPERT, SLCO6C1, TMEM249, TMEM262 and EFCAB9. HSPA1 may be an additional auxiliary complex member. The core complex members CATSPER1, CATSPER2, CATSPER3 and CATSPER4 form a heterotetrameric channel. The auxiliary CATSPERB, CATSPERG, CATSPERD and CATSPERE subunits form a pavilion-like structure over the pore which stabilizes the complex through interactions with CATSPER4, CATSPER3, CATSPER1 and CATSPER2 respectively. SLCO6C1 interacts with CATSPERE and TMEM262/CATSPERH interacts with CATSPERB, further stabilizing the complex. C2CD6/CATSPERT interacts at least with CATSPERD and is required for targeting the CatSper complex in the flagellar membrane. In terms of tissue distribution, expressed in cauda sperm (at protein level).

The protein localises to the cell projection. Its subcellular location is the cilium. The protein resides in the flagellum membrane. Functionally, auxiliary component of the CatSper complex, a complex involved in sperm cell hyperactivation. Sperm cell hyperactivation is needed for sperm motility which is essential late in the preparation of sperm for fertilization. Required for CatSper complex targeting and trafficking into the quadrilinear nanodomains. Targets the preassembled CatSper complexes to elongating flagella, where it links the channel-carrying vesicles and motor proteins. In Mus musculus (Mouse), this protein is Cation channel sperm-associated targeting subunit tau.